A 364-amino-acid chain; its full sequence is UDP-N-acetylglucosamine--N-acetylmuramyl-(pentapeptide) pyrophosphoryl-undecaprenol N-acetylglucosamine transferase (364 aa).

UDP-N-acetyl-alpha-D-glucosamine contacts are provided by residues 10 to 12, Asn-124, Ser-195, and Gln-295; that span reads TGG.

The protein belongs to the glycosyltransferase 28 family. MurG subfamily.

Its subcellular location is the cell membrane. The enzyme catalyses di-trans,octa-cis-undecaprenyl diphospho-N-acetyl-alpha-D-muramoyl-L-alanyl-D-glutamyl-meso-2,6-diaminopimeloyl-D-alanyl-D-alanine + UDP-N-acetyl-alpha-D-glucosamine = di-trans,octa-cis-undecaprenyl diphospho-[N-acetyl-alpha-D-glucosaminyl-(1-&gt;4)]-N-acetyl-alpha-D-muramoyl-L-alanyl-D-glutamyl-meso-2,6-diaminopimeloyl-D-alanyl-D-alanine + UDP + H(+). It functions in the pathway cell wall biogenesis; peptidoglycan biosynthesis. Functionally, cell wall formation. Catalyzes the transfer of a GlcNAc subunit on undecaprenyl-pyrophosphoryl-MurNAc-pentapeptide (lipid intermediate I) to form undecaprenyl-pyrophosphoryl-MurNAc-(pentapeptide)GlcNAc (lipid intermediate II). The polypeptide is UDP-N-acetylglucosamine--N-acetylmuramyl-(pentapeptide) pyrophosphoryl-undecaprenol N-acetylglucosamine transferase (Bacillus pumilus (strain SAFR-032)).